A 347-amino-acid chain; its full sequence is NAD-dependent alcohol dehydrogenase (347 aa).

Lys11 is subject to N6-methyllysine. Residues Cys38, His68, Glu98, Cys101, Cys104, Cys112, and Cys154 each contribute to the Zn(2+) site. Residue Lys213 is modified to N6-methyllysine.

The protein belongs to the zinc-containing alcohol dehydrogenase family. As to quaternary structure, homodimer and homotetramer. The cofactor is Zn(2+).

It carries out the reaction a primary alcohol + NAD(+) = an aldehyde + NADH + H(+). The catalysed reaction is a secondary alcohol + NAD(+) = a ketone + NADH + H(+). The sequence is that of NAD-dependent alcohol dehydrogenase (adh) from Sulfurisphaera tokodaii (strain DSM 16993 / JCM 10545 / NBRC 100140 / 7) (Sulfolobus tokodaii).